A 349-amino-acid polypeptide reads, in one-letter code: MRLHGEVSFDEDEEEVVMVPAAALSSSPLNGGAVPVTRLVVGYALTKKKVKSFLQPNLLLLARKKGINLVAIDDTRPLAEQGPFDVILHKITSKEWQQVLEDYHEEHPEVTVLDPPNAINHLNNRQSMLAEVSDLNLSSFYGEVCTPRQLVIMRDPSSIPTAVAMAGLTLPLVAKPLVVDGTSKSHELSLAYDEASLSMLDPPLVLQEFVNHGGILFKVYIIGETIQVVRRFSLPDVNTYDLLNNVGVYRFPRVSCAAASADHADLDPHISELPPRPLLEKLGKELRGRLGLRLFNIDMIRELGTKDRYYIIDINYFPGFGKMPGYEHIFTDFLLNLAQSKYKKCLSGG.

Positions 48 and 90 each coordinate 1D-myo-inositol 1,3,4-trisphosphate. Arg-125 and Lys-175 together coordinate ATP. Residues His-186 and Lys-218 each coordinate 1D-myo-inositol 1,3,4-trisphosphate. ATP contacts are provided by residues 207-218 (QEFVNHGGILFK) and Ser-233. Positions 298, 313, and 315 each coordinate Mg(2+). A 1D-myo-inositol 1,3,4-trisphosphate-binding site is contributed by Asn-315.

This sequence belongs to the ITPK1 family. As to quaternary structure, monomer. The cofactor is Mg(2+).

The catalysed reaction is 1D-myo-inositol 3,4,5,6-tetrakisphosphate + ATP = 1D-myo-inositol 1,3,4,5,6-pentakisphosphate + ADP + H(+). The enzyme catalyses 1D-myo-inositol 1,3,4-trisphosphate + ATP = 1D-myo-inositol 1,3,4,5-tetrakisphosphate + ADP + H(+). It carries out the reaction 1D-myo-inositol 1,3,4-trisphosphate + ATP = 1D-myo-inositol 1,3,4,6-tetrakisphosphate + ADP + H(+). Kinase that can phosphorylate various inositol polyphosphate such as Ins(3,4,5,6)P4 or Ins(1,3,4)P3 and participates in phytic acid biosynthesis in developing seeds. Phytic acid is the primary storage form of phosphorus in cereal grains and other plant seeds. The chain is Inositol-tetrakisphosphate 1-kinase 2 (ITPK2) from Oryza sativa subsp. indica (Rice).